Reading from the N-terminus, the 387-residue chain is Alanine racemase (387 aa).

Lys48 serves as the catalytic Proton acceptor; specific for D-alanine. N6-(pyridoxal phosphate)lysine is present on Lys48. A substrate-binding site is contributed by Arg146. Tyr267 functions as the Proton acceptor; specific for L-alanine in the catalytic mechanism. Met315 serves as a coordination point for substrate.

The protein belongs to the alanine racemase family. Pyridoxal 5'-phosphate serves as cofactor.

The enzyme catalyses L-alanine = D-alanine. It functions in the pathway amino-acid biosynthesis; D-alanine biosynthesis; D-alanine from L-alanine: step 1/1. In terms of biological role, catalyzes the interconversion of L-alanine and D-alanine. May also act on other amino acids. The protein is Alanine racemase (alr) of Methylacidiphilum infernorum (isolate V4) (Methylokorus infernorum (strain V4)).